Reading from the N-terminus, the 415-residue chain is Adipocyte plasma membrane-associated protein (415 aa).

Residues 1–29 (MSEADGLRQRRPLRPQVVTDDGQVPEVKE) form a disordered region. Position 2 is an N-acetylserine (Ser-2). Over 2–39 (SEADGLRQRRPLRPQVVTDDGQVPEVKEGSSFSGRVFR) the chain is Cytoplasmic. At Thr-19 the chain carries Phosphothreonine. A helical; Signal-anchor for type II membrane protein transmembrane segment spans residues 40 to 60 (MTFLMLAVSLAIPLLGAMMLL). Residues 61–415 (ESPIDPQSFS…FICRLSLQSI (355 aa)) are Extracellular-facing. Asn-159 is a glycosylation site (N-linked (GlcNAc...) asparagine).

The protein belongs to the strictosidine synthase family. Glycosylated in vitro. In terms of tissue distribution, strongly expressed in adipose tissue. Highly expressed in liver, heart, and kidney. Expressed at intermediate level in brain and lung. Weakly expressed in spleen, skeletal muscle and testis.

The protein localises to the membrane. Exhibits strong arylesterase activity with beta-naphthyl acetate and phenyl acetate. May play a role in adipocyte differentiation. The chain is Adipocyte plasma membrane-associated protein (Apmap) from Mus musculus (Mouse).